Consider the following 82-residue polypeptide: Diphthamide biosynthesis protein 3 (82 aa).

In terms of domain architecture, DPH-type MB spans 4–60; that stretch reads FHDEVEIEDFQYDEDSETYFYPCPCGDNFAITKEDLENGEDVATCPSCSLIIKVIYD. Residues cysteine 26, cysteine 28, cysteine 48, and cysteine 51 each coordinate Fe cation.

It belongs to the DPH3 family. As to quaternary structure, component of the 2-(3-amino-3-carboxypropyl)histidine synthase complex composed of DPH1, DPH2, DPH3 and a NADH-dependent reductase. Interacts with SERGEF. The cofactor is Fe(2+). In terms of tissue distribution, widely expressed with highest levels in heart, liver, kidney and testis.

It localises to the cytoplasm. The protein resides in the nucleus. It carries out the reaction [3Fe-4S](1+)-[protein] + Fe(2+)-[Dph3] = [3Fe-4S](0)-[protein] + Fe(3+)-[Dph3]. It catalyses the reaction 2 [3Fe-4S](0)-[protein] + 2 Fe(2+)-[Dph3] + NADH = 2 [4Fe-4S](1+)-[protein] + 2 [Dph3] + NAD(+) + H(+). The protein operates within protein modification; peptidyl-diphthamide biosynthesis. Its function is as follows. Required for the first step of diphthamide biosynthesis, a post-translational modification of histidine which occurs in elongation factor 2. DPH1 and DPH2 transfer a 3-amino-3-carboxypropyl (ACP) group from S-adenosyl-L-methionine (SAM) to a histidine residue, the reaction is assisted by a reduction system comprising DPH3 and a NADH-dependent reductase. Acts as an electron donor to reduce the Fe-S cluster in DPH1-DPH2 keeping the [4Fe-4S] clusters in the active and reduced state. Restores iron to DPH1-DPH2 iron-sulfur clusters which have degraded from [4Fe-4S] to [3Fe-4S] by donating an iron atom to reform [4Fe-4S] clusters, in a manner dependent on the presence of elongation factor 2 and SAM. Associates with the elongator complex and is required for tRNA Wobble base modifications mediated by the elongator complex. The elongator complex is required for multiple tRNA modifications, including mcm5U (5-methoxycarbonylmethyl uridine), mcm5s 2U (5-methoxycarbonylmethyl-2-thiouridine), and ncm5U (5-carbamoylmethyl uridine). The sequence is that of Diphthamide biosynthesis protein 3 from Mus musculus (Mouse).